Here is a 331-residue protein sequence, read N- to C-terminus: Glycerol-3-phosphate dehydrogenase [NAD(P)+] (331 aa).

The NADPH site is built by S10, W11, R31, R32, and K105. Residues K105 and G135 each contribute to the sn-glycerol 3-phosphate site. A139 lines the NADPH pocket. K190, D243, S253, R254, and N255 together coordinate sn-glycerol 3-phosphate. The Proton acceptor role is filled by K190. Residue R254 coordinates NADPH. V279 and E281 together coordinate NADPH.

It belongs to the NAD-dependent glycerol-3-phosphate dehydrogenase family.

It localises to the cytoplasm. It carries out the reaction sn-glycerol 3-phosphate + NAD(+) = dihydroxyacetone phosphate + NADH + H(+). It catalyses the reaction sn-glycerol 3-phosphate + NADP(+) = dihydroxyacetone phosphate + NADPH + H(+). It participates in membrane lipid metabolism; glycerophospholipid metabolism. Its function is as follows. Catalyzes the reduction of the glycolytic intermediate dihydroxyacetone phosphate (DHAP) to sn-glycerol 3-phosphate (G3P), the key precursor for phospholipid synthesis. This chain is Glycerol-3-phosphate dehydrogenase [NAD(P)+], found in Corynebacterium diphtheriae (strain ATCC 700971 / NCTC 13129 / Biotype gravis).